The chain runs to 236 residues: MAEPSAATQSPSISSSSSGAEPSAPGGGGSPGACPALGTKSCSSSCAVHDLIFWRDVKKTGFVFGTTLIMLLSLAAFSVISVVSYLILALLSVTISFRIYKSVIQAVQKSEEGHPFKAYLDVDITLSSEAFHNYMNAAMVHINRALKLIIRLFLVEDLVDSLKLAVFMWLMTYVGAVFNGITLLILAELLIFSVPIVYEKYKTQIDHYVGIARDQTKSIVEKIQAKLPGIAKKKAE.

Over residues M1 to A24 the composition is skewed to low complexity. A disordered region spans residues M1–P31. A2 carries the N-acetylalanine modification. At A2–T67 the chain is on the cytoplasmic side. S30 carries the post-translational modification Phosphoserine. In terms of domain architecture, Reticulon spans V48–E236. Residues L68–L91 constitute an intramembrane region (helical). The Cytoplasmic portion of the chain corresponds to S92–R151. An intramembrane region (helical) is located at residues L152 to T172. The Cytoplasmic segment spans residues Y173–A176. The helical intramembrane region spans V177–V197. Positions I191–E236 are interaction with FADD. Over Y198–E236 the chain is Cytoplasmic. The tract at residues Q204–D206 is interaction with BACE1.

As to quaternary structure, homodimer. Interacts with RTN4. Interacts with BACE1, BACE2, BCL2 and FADD. Interacts with ATL1 and ATL2. Interacts with TMEM33. Interacts with ZFYVE27 and with KIF5A in a ZFYVE27-dependent manner. Interacts with RIGI. Interacts with TRIM25.

The protein localises to the endoplasmic reticulum membrane. It is found in the golgi apparatus membrane. Functionally, may be involved in membrane trafficking in the early secretory pathway. Inhibits BACE1 activity and amyloid precursor protein processing. May induce caspase-8 cascade and apoptosis. May favor BCL2 translocation to the mitochondria upon endoplasmic reticulum stress. Induces the formation of endoplasmic reticulum tubules. Acts also as an inflammation-resolving regulator by interacting with both TRIM25 and RIGI, subsequently impairing RIGI 'Lys-63'-linked polyubiquitination leading to IRF3 and NF-kappa-B inhibition. The chain is Reticulon-3 (RTN3) from Pongo abelii (Sumatran orangutan).